A 196-amino-acid chain; its full sequence is MADGQMPFSCHYPSRLRRDPFRDSPLPSRLLDDDFGMDPFPDDLTSSWRNWALPRFSTGWPGTLRSGMVPRGPTAAARFGVPAEGRSPPPFPGEPWKVCVNVHSFKPEELMVKTKDGYVEVSGKHEEKQQEGGIVSKNFTKKIQLPAEVDPVTVFASLSPEGLLIIEAPQVPPYSPFGESNFNNELPQDSQEVTCT.

A disordered region spans residues 1-35 (MADGQMPFSCHYPSRLRRDPFRDSPLPSRLLDDDF). A phosphoserine mark is found at S24 and S57. T63 carries the post-translational modification Phosphothreonine. R71 and R78 each carry asymmetric dimethylarginine. Residues 74-185 (TAAARFGVPA…PFGESNFNNE (112 aa)) form the sHSP domain. At S87 the chain carries Phosphoserine. The tract at residues 176 to 196 (PFGESNFNNELPQDSQEVTCT) is disordered. The segment covering 178–196 (GESNFNNELPQDSQEVTCT) has biased composition (polar residues).

It belongs to the small heat shock protein (HSP20) family. As to quaternary structure, monomer. Forms a ternary complex with BAG3 and HSPA1A. Component of the chaperone-assisted selective autophagy (CASA) complex consisting of BAG3, HSPA8/HSC70, HSPB8 and STUB1/CHIP. Interacts with HSPB1. Interacts with DNAJB6. Interacts with BAG3. In terms of processing, phosphorylated.

It localises to the cytoplasm. Its subcellular location is the nucleus. In terms of biological role, involved in the chaperone-assisted selective autophagy (CASA), a crucial process for protein quality control, particularly in mechanical strained cells and tissues such as muscle. Displays temperature-dependent chaperone activity. This is Heat shock protein beta-8 (HSPB8) from Canis lupus familiaris (Dog).